The following is a 445-amino-acid chain: Alkylglycerol monooxygenase (445 aa).

2 helical membrane passes run 43–63 (ATPFFISLMLLELVVSWILKG) and 111–131 (WDSPWTWYSAFLGVDFGYYWF). Residues 120–249 (AFLGVDFGYY…LIIWDKIFGT (130 aa)) enclose the Fatty acid hydroxylase domain. The Histidine box-1 motif lies at 132 to 136 (HRMAH). The Histidine box-2 signature appears at 145-149 (HQTHH). The Histidine box-3 signature appears at 221 to 225 (HRVHH). 3 helical membrane-spanning segments follow: residues 334–354 (LLKIYTVVQFALMLAFYEETF), 363–383 (VTLLLRVCFIILTLTSIGFLL), and 413–433 (VPSLSSAFEIVFSICIAFWGV).

This sequence belongs to the sterol desaturase family. TMEM195 subfamily. The cofactor is Fe cation.

The protein localises to the endoplasmic reticulum membrane. The catalysed reaction is 1-O-(1,2-saturated-alkyl)-sn-glycerol + (6R)-L-erythro-5,6,7,8-tetrahydrobiopterin + O2 = a 1-(1-hydroxyalkyl)-sn-glycerol + (6R)-L-erythro-6,7-dihydrobiopterin + H2O. Functionally, glyceryl-ether monooxygenase that cleaves the O-alkyl bond of ether lipids. Ether lipids are essential components of brain membranes. This is Alkylglycerol monooxygenase (AGMO) from Homo sapiens (Human).